The chain runs to 117 residues: Dolichyl-diphosphooligosaccharide--protein glycosyltransferase subunit DAD1 (117 aa).

The Cytoplasmic portion of the chain corresponds to 1 to 33 (MAKTSSTTKDAQDLFHAIWSAYSATPTNLKIID). Residues 34–54 (LYVVFAVFTALLQDVYMALVG) form a helical membrane-spanning segment. Over 55–57 (PFP) the chain is Lumenal. A helical membrane pass occupies residues 58–78 (FNSFLSGVLSCVGTAVLAVCL). The Cytoplasmic segment spans residues 79 to 96 (RIQVNKENKEFKDLGPER). The helical transmembrane segment at 97–117 (AFADFVLCNLVLHLVIMNFLG) threads the bilayer.

The protein belongs to the DAD/OST2 family. As to quaternary structure, component of the oligosaccharyltransferase (OST) complex.

The protein resides in the endoplasmic reticulum membrane. It participates in protein modification; protein glycosylation. Its function is as follows. Subunit of the oligosaccharyl transferase (OST) complex that catalyzes the initial transfer of a defined glycan (Glc(3)Man(9)GlcNAc(2) in eukaryotes) from the lipid carrier dolichol-pyrophosphate to an asparagine residue within an Asn-X-Ser/Thr consensus motif in nascent polypeptide chains, the first step in protein N-glycosylation. N-glycosylation occurs cotranslationally and the complex associates with the Sec61 complex at the channel-forming translocon complex that mediates protein translocation across the endoplasmic reticulum (ER). All subunits are required for a maximal enzyme activity. This chain is Dolichyl-diphosphooligosaccharide--protein glycosyltransferase subunit DAD1 (DAD1), found in Pisum sativum (Garden pea).